The primary structure comprises 358 residues: DNA polymerase IV (358 aa).

The 182-residue stretch at 4–185 (IIHVDMDCFY…LPLIKIPGVG (182 aa)) folds into the UmuC domain. The Mg(2+) site is built by Asp-8 and Asp-103. The active site involves Glu-104.

It belongs to the DNA polymerase type-Y family. In terms of assembly, monomer. Mg(2+) serves as cofactor.

Its subcellular location is the cytoplasm. The enzyme catalyses DNA(n) + a 2'-deoxyribonucleoside 5'-triphosphate = DNA(n+1) + diphosphate. Functionally, poorly processive, error-prone DNA polymerase involved in untargeted mutagenesis. Copies undamaged DNA at stalled replication forks, which arise in vivo from mismatched or misaligned primer ends. These misaligned primers can be extended by PolIV. Exhibits no 3'-5' exonuclease (proofreading) activity. May be involved in translesional synthesis, in conjunction with the beta clamp from PolIII. This chain is DNA polymerase IV, found in Shewanella pealeana (strain ATCC 700345 / ANG-SQ1).